The following is a 272-amino-acid chain: Ethanolamine ammonia-lyase small subunit (272 aa).

Adenosylcob(III)alamin contacts are provided by Val-161, Glu-182, and Cys-211.

The protein belongs to the EutC family. The basic unit is a heterodimer which dimerizes to form tetramers. The heterotetramers trimerize; 6 large subunits form a core ring with 6 small subunits projecting outwards. The cofactor is adenosylcob(III)alamin.

It localises to the bacterial microcompartment. The catalysed reaction is ethanolamine = acetaldehyde + NH4(+). It functions in the pathway amine and polyamine degradation; ethanolamine degradation. Catalyzes the deamination of various vicinal amino-alcohols to oxo compounds. Allows this organism to utilize ethanolamine as the sole source of nitrogen and carbon in the presence of external vitamin B12. The polypeptide is Ethanolamine ammonia-lyase small subunit (Xanthomonas campestris pv. campestris (strain B100)).